We begin with the raw amino-acid sequence, 209 residues long: uncharacterized protein (209 aa).

The FCP1 homology domain occupies 1–199; that stretch reads MQVFLDLDET…DELKRVTASL (199 aa).

This is an uncharacterized protein from Dryophytes versicolor (chameleon treefrog).